A 64-amino-acid chain; its full sequence is MGMRMMFTMFLLVVLTTTVVSFNLDRESNHENRRTSNQITRGMWDECCDDPPCRQNNMEHCPAS.

The first 21 residues, 1–21 (MGMRMMFTMFLLVVLTTTVVS), serve as a signal peptide directing secretion. The propeptide occupies 22-45 (FNLDRESNHENRRTSNQITRGMWD). Intrachain disulfides connect cysteine 47–cysteine 53 and cysteine 48–cysteine 61. The interval 49–51 (DDP) is lacks the Ser-Xaa-Pro motif that is crucial for potent interaction with nAChR.

Belongs to the conotoxin A superfamily. As to expression, expressed by the venom duct.

It is found in the secreted. Alpha-conotoxins act on postsynaptic membranes, they bind to the nicotinic acetylcholine receptors (nAChR) and thus inhibit them. Has possibly a distinct nAChR binding mode from other alpha-conotoxins, due to a different three residue motif (lacks the Ser-Xaa-Pro motif). The polypeptide is Alpha-conotoxin-like Lt1.3 (Conus litteratus (Lettered cone)).